Reading from the N-terminus, the 240-residue chain is Uridylate kinase (240 aa).

ATP is bound at residue 12-15; that stretch reads KLSG. The segment at 20-25 is involved in allosteric activation by GTP; it reads GDKGFG. Glycine 54 is a UMP binding site. The ATP site is built by glycine 55 and arginine 59. UMP-binding positions include aspartate 74 and 135–142; that span reads TGSPYFST. Positions 163, 169, and 172 each coordinate ATP.

The protein belongs to the UMP kinase family. In terms of assembly, homohexamer.

Its subcellular location is the cytoplasm. The catalysed reaction is UMP + ATP = UDP + ADP. Its pathway is pyrimidine metabolism; CTP biosynthesis via de novo pathway; UDP from UMP (UMPK route): step 1/1. Allosterically activated by GTP. Inhibited by UTP. In terms of biological role, catalyzes the reversible phosphorylation of UMP to UDP. This chain is Uridylate kinase, found in Levilactobacillus brevis (strain ATCC 367 / BCRC 12310 / CIP 105137 / JCM 1170 / LMG 11437 / NCIMB 947 / NCTC 947) (Lactobacillus brevis).